Here is a 353-residue protein sequence, read N- to C-terminus: Photosystem II D2 protein (353 aa).

Thr-2 is modified (N-acetylthreonine). Thr-2 carries the post-translational modification Phosphothreonine. A helical membrane pass occupies residues 41 to 61 (CAYFALGGWFTGTTFVTSWYT). His-118 contacts chlorophyll a. The helical transmembrane segment at 125–141 (GFMLRQFELARSVQLRP) threads the bilayer. The pheophytin a site is built by Gln-130 and Asn-143. The chain crosses the membrane as a helical span at residues 153-166 (VFVSVFLIYPLGQS). His-198 is a binding site for chlorophyll a. The chain crosses the membrane as a helical span at residues 208–228 (AALLCAIHGATVENTLFEDGD). Positions 215 and 262 each coordinate a plastoquinone. Residue His-215 coordinates Fe cation. His-269 serves as a coordination point for Fe cation. The helical transmembrane segment at 279 to 295 (GLWMSALGVVGLALNLR) threads the bilayer.

Belongs to the reaction center PufL/M/PsbA/D family. In terms of assembly, PSII is composed of 1 copy each of membrane proteins PsbA, PsbB, PsbC, PsbD, PsbE, PsbF, PsbH, PsbI, PsbJ, PsbK, PsbL, PsbM, PsbT, PsbX, PsbY, PsbZ, Psb30/Ycf12, at least 3 peripheral proteins of the oxygen-evolving complex and a large number of cofactors. It forms dimeric complexes. The D1/D2 heterodimer binds P680, chlorophylls that are the primary electron donor of PSII, and subsequent electron acceptors. It shares a non-heme iron and each subunit binds pheophytin, quinone, additional chlorophylls, carotenoids and lipids. There is also a Cl(-1) ion associated with D1 and D2, which is required for oxygen evolution. The PSII complex binds additional chlorophylls, carotenoids and specific lipids. is required as a cofactor.

The protein localises to the plastid. It is found in the chloroplast thylakoid membrane. It carries out the reaction 2 a plastoquinone + 4 hnu + 2 H2O = 2 a plastoquinol + O2. Functionally, photosystem II (PSII) is a light-driven water:plastoquinone oxidoreductase that uses light energy to abstract electrons from H(2)O, generating O(2) and a proton gradient subsequently used for ATP formation. It consists of a core antenna complex that captures photons, and an electron transfer chain that converts photonic excitation into a charge separation. The D1/D2 (PsbA/PsbD) reaction center heterodimer binds P680, the primary electron donor of PSII as well as several subsequent electron acceptors. D2 is needed for assembly of a stable PSII complex. The protein is Photosystem II D2 protein of Populus deltoides (Eastern poplar).